Reading from the N-terminus, the 221-residue chain is Iron-sulfur cluster repair protein YtfE (221 aa).

It belongs to the RIC family. YtfE subfamily. In terms of assembly, homodimer.

It is found in the cytoplasm. Functionally, di-iron-containing protein involved in the repair of iron-sulfur clusters damaged by oxidative and nitrosative stress conditions. The polypeptide is Iron-sulfur cluster repair protein YtfE (Pectobacterium carotovorum subsp. carotovorum (strain PC1)).